Reading from the N-terminus, the 62-residue chain is Teretoxin Tsu1.1 (62 aa).

The first 21 residues, 1–21 (MSCFPVLFVMMLLASQSVWAF), serve as a signal peptide directing secretion. The propeptide occupies 22–40 (PEPETRIGTARDAESMGVR).

Belongs to the teretoxin A (TA) superfamily. Post-translationally, contains 2 disulfide bonds. In terms of tissue distribution, expressed by the venom duct.

The protein localises to the secreted. The protein is Teretoxin Tsu1.1 of Terebra subulata (Chocolate spotted auger).